We begin with the raw amino-acid sequence, 96 residues long: Glutamyl-tRNA(Gln) amidotransferase subunit C (96 aa).

The protein belongs to the GatC family. In terms of assembly, heterotrimer of A, B and C subunits.

It carries out the reaction L-glutamyl-tRNA(Gln) + L-glutamine + ATP + H2O = L-glutaminyl-tRNA(Gln) + L-glutamate + ADP + phosphate + H(+). It catalyses the reaction L-aspartyl-tRNA(Asn) + L-glutamine + ATP + H2O = L-asparaginyl-tRNA(Asn) + L-glutamate + ADP + phosphate + 2 H(+). In terms of biological role, allows the formation of correctly charged Asn-tRNA(Asn) or Gln-tRNA(Gln) through the transamidation of misacylated Asp-tRNA(Asn) or Glu-tRNA(Gln) in organisms which lack either or both of asparaginyl-tRNA or glutaminyl-tRNA synthetases. The reaction takes place in the presence of glutamine and ATP through an activated phospho-Asp-tRNA(Asn) or phospho-Glu-tRNA(Gln). The chain is Glutamyl-tRNA(Gln) amidotransferase subunit C from Halalkalibacterium halodurans (strain ATCC BAA-125 / DSM 18197 / FERM 7344 / JCM 9153 / C-125) (Bacillus halodurans).